A 319-amino-acid chain; its full sequence is Acetyl-coenzyme A carboxylase carboxyl transferase subunit alpha (319 aa).

The CoA carboxyltransferase C-terminal domain maps to 35-292; the sequence is EISKLMRRLV…KKTIAEALAE (258 aa).

The protein belongs to the AccA family. As to quaternary structure, acetyl-CoA carboxylase is a heterohexamer composed of biotin carboxyl carrier protein (AccB), biotin carboxylase (AccC) and two subunits each of ACCase subunit alpha (AccA) and ACCase subunit beta (AccD).

Its subcellular location is the cytoplasm. It carries out the reaction N(6)-carboxybiotinyl-L-lysyl-[protein] + acetyl-CoA = N(6)-biotinyl-L-lysyl-[protein] + malonyl-CoA. It functions in the pathway lipid metabolism; malonyl-CoA biosynthesis; malonyl-CoA from acetyl-CoA: step 1/1. Functionally, component of the acetyl coenzyme A carboxylase (ACC) complex. First, biotin carboxylase catalyzes the carboxylation of biotin on its carrier protein (BCCP) and then the CO(2) group is transferred by the carboxyltransferase to acetyl-CoA to form malonyl-CoA. In Desulfitobacterium hafniense (strain DSM 10664 / DCB-2), this protein is Acetyl-coenzyme A carboxylase carboxyl transferase subunit alpha.